An 877-amino-acid chain; its full sequence is Phosphoenolpyruvate carboxylase (877 aa).

Residues H138 and K544 contribute to the active site.

The protein belongs to the PEPCase type 1 family. Mg(2+) serves as cofactor.

It carries out the reaction oxaloacetate + phosphate = phosphoenolpyruvate + hydrogencarbonate. Its function is as follows. Forms oxaloacetate, a four-carbon dicarboxylic acid source for the tricarboxylic acid cycle. The sequence is that of Phosphoenolpyruvate carboxylase from Vibrio vulnificus (strain YJ016).